We begin with the raw amino-acid sequence, 314 residues long: Olfactory receptor 11H7 (314 aa).

The Extracellular portion of the chain corresponds to 1–24; the sequence is MNNSQISTVTQFVLLGFPGPWKIQ. N2 is a glycosylation site (N-linked (GlcNAc...) asparagine). The helical transmembrane segment at 25-45 threads the bilayer; it reads IIFFSMILLVYIFTLTGNMAI. Over 46–57 the chain is Cytoplasmic; that stretch reads ICAVRWDHRLHT. The chain crosses the membrane as a helical span at residues 58–78; that stretch reads PMYVLLANFSFLEIWYVTCTV. Over 79–97 the chain is Extracellular; that stretch reads PNMLVNFFSKTKTISFSGC. Cysteines 97 and 179 form a disulfide. Residues 98–118 traverse the membrane as a helical segment; the sequence is FTQFHFFFSLGTTECFFLCVM. Residues 119–142 are Cytoplasmic-facing; it reads AYDRYLAICHPLHYPSIMTGQLCG. Residues 143 to 163 traverse the membrane as a helical segment; it reads ILVSLCWLIGFLGHSISIFFI. The Extracellular segment spans residues 164–201; that stretch reads FQLPFCGPNIIDHFLCDVDPLMALSSAPTHIIGHVFHS. Residues 202–222 traverse the membrane as a helical segment; sequence VSSLFINLTMVYILGSYTLVL. The Cytoplasmic portion of the chain corresponds to 223-244; that stretch reads RTVLQVPSSAGWQKAISTCGSH. Residues 245-265 traverse the membrane as a helical segment; it reads LVVVSLFYGAIMLMYVSPTPG. Topologically, residues 266–271 are extracellular; sequence NSVAMH. Residues 272–292 form a helical membrane-spanning segment; the sequence is KLITLIYSVVTPVLNPLIYSL. Residues 293-314 are Cytoplasmic-facing; sequence RNKDMKYALHHVFCGMRIIQRS.

Belongs to the G-protein coupled receptor 1 family.

It localises to the cell membrane. Functionally, odorant receptor. Activated by isovaleric acid. The chain is Olfactory receptor 11H7 (OR11H7) from Homo sapiens (Human).